The sequence spans 295 residues: Glutamyl-Q tRNA(Asp) synthetase (295 aa).

Residues 5 to 9 and glutamate 41 contribute to the L-glutamate site; that span reads RFAPS. The 'HIGH' region motif lies at 8 to 18; that stretch reads PSPTGLLHIGS. Zn(2+) contacts are provided by cysteine 97, cysteine 99, tyrosine 117, and cysteine 121. The L-glutamate site is built by tyrosine 178 and arginine 196. The 'KMSKS' region motif lies at 234-238; it reads KWSKQ. Lysine 237 provides a ligand contact to ATP.

The protein belongs to the class-I aminoacyl-tRNA synthetase family. GluQ subfamily. Zn(2+) is required as a cofactor.

Its function is as follows. Catalyzes the tRNA-independent activation of glutamate in presence of ATP and the subsequent transfer of glutamate onto a tRNA(Asp). Glutamate is transferred on the 2-amino-5-(4,5-dihydroxy-2-cyclopenten-1-yl) moiety of the queuosine in the wobble position of the QUC anticodon. In Neisseria meningitidis serogroup B (strain ATCC BAA-335 / MC58), this protein is Glutamyl-Q tRNA(Asp) synthetase.